We begin with the raw amino-acid sequence, 403 residues long: Large ribosomal subunit protein uL3 (403 aa).

Residues 1 to 37 (MSHRKFSAPRHGSLGFLPRKRSSRHRGKVKSFPKDDP) form a disordered region. At S13 the chain carries Phosphoserine. Residues 18–31 (PRKRSSRHRGKVKS) are compositionally biased toward basic residues. A Glycyl lysine isopeptide (Lys-Gly) (interchain with G-Cter in SUMO2) cross-link involves residue K39. N6-acetyllysine is present on K136. Glycyl lysine isopeptide (Lys-Gly) (interchain with G-Cter in SUMO2) cross-links involve residues K224 and K226. Position 245 is a tele-methylhistidine (H245). N6-acetyllysine; alternate occurs at positions 286 and 294. A Glycyl lysine isopeptide (Lys-Gly) (interchain with G-Cter in SUMO2); alternate cross-link involves residue K286. A Glycyl lysine isopeptide (Lys-Gly) (interchain with G-Cter in SUMO1); alternate cross-link involves residue K294. S304 is subject to Phosphoserine. Position 366 is an N6-acetyllysine; alternate (K366). K366 is covalently cross-linked (Glycyl lysine isopeptide (Lys-Gly) (interchain with G-Cter in SUMO2); alternate). An N6-acetyllysine modification is found at K373. Glycyl lysine isopeptide (Lys-Gly) (interchain with G-Cter in SUMO2) cross-links involve residues K386, K393, and K399.

It belongs to the universal ribosomal protein uL3 family. Component of the large ribosomal subunit. Interacts with DHX33. In terms of processing, constitutively monomethylated at His-245 by METTL18. Methylation at His-245 regulates translation elongation by slowing ribosome traversal on tyrosine codons: slower elongation provides enough time for proper folding of synthesized proteins and prevents cellular aggregation of tyrosine-rich proteins It is not required for incorporation of RPL3 into ribosomes.

The protein localises to the nucleus. It localises to the nucleolus. It is found in the cytoplasm. Functionally, component of the large ribosomal subunit. The ribosome is a large ribonucleoprotein complex responsible for the synthesis of proteins in the cell. The sequence is that of Large ribosomal subunit protein uL3 (RPL3) from Macaca fascicularis (Crab-eating macaque).